The chain runs to 319 residues: MTQLDQLKQFTTVVADTGDFQAMRAYAPHDATTNPSLILKAVQKAEYRPLLEQAVRDARSDSVEDIIDAVLVAFGCEILSIIPGRVSTEVDARLSFDTEATVAKAKHLIALYEARGVARERVLIKIASTWEGIRAADQLRAEGIRCNMTLLFSLAQAVACAEAGVQLISPFVGRIYDWYKKDAGANWDPIAQGGPNDPGVQSVLRIYNYYKKFDYPTEVMGASFRNISQIVELAGCDLLTISPDLLAQLQQSDAPVERKLSPDNANAANIVRLPADEKSFRWHMNADAMATEKLAEGIRLFAADAIKLEALIEPLRAAA.

Residue lysine 125 is the Schiff-base intermediate with substrate of the active site.

It belongs to the transaldolase family. Type 1 subfamily. In terms of assembly, homodimer.

Its subcellular location is the cytoplasm. The enzyme catalyses D-sedoheptulose 7-phosphate + D-glyceraldehyde 3-phosphate = D-erythrose 4-phosphate + beta-D-fructose 6-phosphate. It participates in carbohydrate degradation; pentose phosphate pathway; D-glyceraldehyde 3-phosphate and beta-D-fructose 6-phosphate from D-ribose 5-phosphate and D-xylulose 5-phosphate (non-oxidative stage): step 2/3. Functionally, transaldolase is important for the balance of metabolites in the pentose-phosphate pathway. In Ralstonia pickettii (strain 12J), this protein is Transaldolase.